The chain runs to 46 residues: Phoratoxin (46 aa).

Intrachain disulfides connect Cys-3/Cys-40, Cys-4/Cys-32, and Cys-16/Cys-26. Residue His-46 is modified to Blocked carboxyl end (His).

Belongs to the plant thionin (TC 1.C.44) family.

The protein resides in the secreted. Thionins are small plant proteins which are toxic to animal cells. They seem to exert their toxic effect at the level of the cell membrane. Their precise function is not known. This chain is Phoratoxin, found in Phoradendron leucarpum subsp. tomentosum (California mistletoe).